Reading from the N-terminus, the 167-residue chain is uncharacterized protein (167 aa).

A disordered region spans residues 140 to 167 (SSEEKKKKKKKKKEKSLHTEREKKKKKF). Positions 145–154 (KKKKKKKKEK) are enriched in basic residues.

This is an uncharacterized protein from Saccharomyces cerevisiae (strain ATCC 204508 / S288c) (Baker's yeast).